Here is a 166-residue protein sequence, read N- to C-terminus: NAD(P)H-quinone oxidoreductase subunit I, chloroplastic (166 aa).

4Fe-4S ferredoxin-type domains lie at Gly55–Lys84 and Leu95–Glu124. Cys64, Cys67, Cys70, Cys74, Cys104, Cys107, Cys110, and Cys114 together coordinate [4Fe-4S] cluster.

This sequence belongs to the complex I 23 kDa subunit family. As to quaternary structure, NDH is composed of at least 16 different subunits, 5 of which are encoded in the nucleus. [4Fe-4S] cluster serves as cofactor.

The protein resides in the plastid. It is found in the chloroplast thylakoid membrane. It catalyses the reaction a plastoquinone + NADH + (n+1) H(+)(in) = a plastoquinol + NAD(+) + n H(+)(out). The enzyme catalyses a plastoquinone + NADPH + (n+1) H(+)(in) = a plastoquinol + NADP(+) + n H(+)(out). Functionally, NDH shuttles electrons from NAD(P)H:plastoquinone, via FMN and iron-sulfur (Fe-S) centers, to quinones in the photosynthetic chain and possibly in a chloroplast respiratory chain. The immediate electron acceptor for the enzyme in this species is believed to be plastoquinone. Couples the redox reaction to proton translocation, and thus conserves the redox energy in a proton gradient. In Oxypappus scaber, this protein is NAD(P)H-quinone oxidoreductase subunit I, chloroplastic.